The sequence spans 233 residues: Uracil-DNA glycosylase (233 aa).

The Proton acceptor role is filled by aspartate 70.

It belongs to the uracil-DNA glycosylase (UDG) superfamily. UNG family.

It localises to the cytoplasm. The enzyme catalyses Hydrolyzes single-stranded DNA or mismatched double-stranded DNA and polynucleotides, releasing free uracil.. Its function is as follows. Excises uracil residues from the DNA which can arise as a result of misincorporation of dUMP residues by DNA polymerase or due to deamination of cytosine. The sequence is that of Uracil-DNA glycosylase from Helicobacter pylori (strain HPAG1).